Reading from the N-terminus, the 370-residue chain is Queuine tRNA-ribosyltransferase (370 aa).

The active-site Proton acceptor is D89. Residues D89 to F93, D143, Q187, and G214 contribute to the substrate site. Residues G245–N251 form an RNA binding region. D264 acts as the Nucleophile in catalysis. An RNA binding; important for wobble base 34 recognition region spans residues T269–R273. Zn(2+) contacts are provided by C302, C304, C307, and H333.

The protein belongs to the queuine tRNA-ribosyltransferase family. Homodimer. Within each dimer, one monomer is responsible for RNA recognition and catalysis, while the other monomer binds to the replacement base PreQ1. Zn(2+) serves as cofactor.

The catalysed reaction is 7-aminomethyl-7-carbaguanine + guanosine(34) in tRNA = 7-aminomethyl-7-carbaguanosine(34) in tRNA + guanine. It functions in the pathway tRNA modification; tRNA-queuosine biosynthesis. In terms of biological role, catalyzes the base-exchange of a guanine (G) residue with the queuine precursor 7-aminomethyl-7-deazaguanine (PreQ1) at position 34 (anticodon wobble position) in tRNAs with GU(N) anticodons (tRNA-Asp, -Asn, -His and -Tyr). Catalysis occurs through a double-displacement mechanism. The nucleophile active site attacks the C1' of nucleotide 34 to detach the guanine base from the RNA, forming a covalent enzyme-RNA intermediate. The proton acceptor active site deprotonates the incoming PreQ1, allowing a nucleophilic attack on the C1' of the ribose to form the product. After dissociation, two additional enzymatic reactions on the tRNA convert PreQ1 to queuine (Q), resulting in the hypermodified nucleoside queuosine (7-(((4,5-cis-dihydroxy-2-cyclopenten-1-yl)amino)methyl)-7-deazaguanosine). This chain is Queuine tRNA-ribosyltransferase, found in Hamiltonella defensa subsp. Acyrthosiphon pisum (strain 5AT).